A 455-amino-acid polypeptide reads, in one-letter code: Kynurenine 3-monooxygenase (455 aa).

It belongs to the aromatic-ring hydroxylase family. KMO subfamily. FAD is required as a cofactor.

The enzyme catalyses L-kynurenine + NADPH + O2 + H(+) = 3-hydroxy-L-kynurenine + NADP(+) + H2O. Its pathway is cofactor biosynthesis; NAD(+) biosynthesis; quinolinate from L-kynurenine: step 1/3. In terms of biological role, catalyzes the hydroxylation of L-kynurenine (L-Kyn) to form 3-hydroxy-L-kynurenine (L-3OHKyn). Required for synthesis of quinolinic acid. In Stenotrophomonas maltophilia (strain K279a), this protein is Kynurenine 3-monooxygenase.